A 635-amino-acid chain; its full sequence is S-type anion channel SLAH3 (635 aa).

Over 1 to 253 (MEEKPNYVIQ…IVLPNDKKWP (253 aa)) the chain is Cytoplasmic. Residues 102 to 121 (SDPTTSLSSENHKNSGSTGK) show a composition bias toward polar residues. Positions 102–173 (SDPTTSLSSE…SGHHQNQNQA (72 aa)) are disordered. The segment covering 153–165 (NHHHHLHRQHQSG) has biased composition (basic residues). Serine 189 is modified (phosphoserine). The tract at residues 193–217 (ERQFTRKPASVEPEAPNRNNQNLNT) is disordered. A helical transmembrane segment spans residues 254–276 (FLLRYPISTFGMCLGVSSQAIMW). At 277–299 (KTLATAEPTKFLHVPLWINQGLW) the chain is on the extracellular side. The helical transmembrane segment at 300–320 (FISVALILTIATIYLLKIILF) threads the bilayer. Residues 321–335 (FEAVRREYYHPIRIN) lie on the Cytoplasmic side of the membrane. Residues 336–356 (FFFAPFISLLFLALGVPPSII) traverse the membrane as a helical segment. Over 357–358 (TD) the chain is Extracellular. A helical transmembrane segment spans residues 359–379 (LPHFLWYLLMFPFICLELKIY). The Cytoplasmic segment spans residues 380–396 (GQWMSGGQRRLSRVANP). A helical transmembrane segment spans residues 397–417 (TNHLSVVGNFVGALLGASMGL). The Extracellular segment spans residues 418-419 (RE). A helical membrane pass occupies residues 420–440 (GPIFFYAVGMAHYLVLFVTLY). The Cytoplasmic portion of the chain corresponds to 441–455 (QRLPTNETLPKDLHP). A helical transmembrane segment spans residues 456–476 (VFFLFVAAPSVASMAWAKVTG). Position 477 (serine 477) is a topological domain, extracellular. Residues 478 to 498 (FDYGSKVCYFIAIFLYFSLAV) form a helical membrane-spanning segment. Residues 499-504 (RINFFR) are Cytoplasmic-facing. The chain crosses the membrane as a helical span at residues 505–525 (GIKFSLSWWAYTFPMTGAAIA). Topologically, residues 526 to 541 (TIRYATVVKSTMTQIM) are extracellular. A helical membrane pass occupies residues 542–562 (CVVLCAIATLVVFALLVTTII). Residues 563–635 (HAFVLRDLFP…NGKTQESDSS (73 aa)) lie on the Cytoplasmic side of the membrane. A disordered region spans residues 611–635 (FTDSDSSQSNDVEACNGKTQESDSS). The span at 614–635 (SDSSQSNDVEACNGKTQESDSS) shows a compositional bias: polar residues.

Belongs to the SLAC1 S-type anion channel family. Homotrimer. Interacts with KAT1. In terms of tissue distribution, expressed in the whole plant, escpecially in vascular systems.

It localises to the cell membrane. In terms of biological role, slow, weak voltage-dependent S-type anion efflux channel involved in maintenance of anion homeostasis. Binds to the highly selective inward-rectifying potassium channel KAT1 and inhibits its activity. Functions as an essential negative regulator of inward potassium channels in guard cells. Essential for the efficient stomatal closure and opening in guard cells. In Arabidopsis thaliana (Mouse-ear cress), this protein is S-type anion channel SLAH3 (SLAH3).